A 236-amino-acid chain; its full sequence is GCN5-related N-acetyltransferase 8 (236 aa).

One can recognise an N-acetyltransferase domain in the interval Ala-96 to Asn-235. Acetyl-CoA-binding positions include Ile-161 to Val-163, Arg-169 to Ser-174, Asn-200 to Asn-202, and Tyr-207. The active-site Proton donor is the Tyr-207.

It belongs to the acetyltransferase family. GNAT subfamily. Oligomer. In terms of tissue distribution, expressed throughout the plant.

It localises to the cytoplasm. Its subcellular location is the nucleus. The catalysed reaction is an N-terminal L-alpha-aminoacyl-[protein] + acetyl-CoA = N-terminal N(alpha)-acetyl-L-alpha-aminoacyl-[protein] + CoA + H(+). The enzyme catalyses L-lysyl-[protein] + acetyl-CoA = N(6)-acetyl-L-lysyl-[protein] + CoA + H(+). Probable protein acetyltransferase with dual specificity triggering both N-alpha-acetylation (NTA) and epsilon-lysine acetylation (KA). In Arabidopsis thaliana (Mouse-ear cress), this protein is GCN5-related N-acetyltransferase 8.